The primary structure comprises 80 residues: Small ribosomal subunit protein bS18 (80 aa).

The protein belongs to the bacterial ribosomal protein bS18 family. In terms of assembly, part of the 30S ribosomal subunit. Forms a tight heterodimer with protein bS6.

Binds as a heterodimer with protein bS6 to the central domain of the 16S rRNA, where it helps stabilize the platform of the 30S subunit. The polypeptide is Small ribosomal subunit protein bS18 (Clostridium perfringens (strain ATCC 13124 / DSM 756 / JCM 1290 / NCIMB 6125 / NCTC 8237 / Type A)).